The sequence spans 602 residues: Elongation factor 4 (602 aa).

The 182-residue stretch at 7-188 (ENIRNFSIIA…AIVELIPPPK (182 aa)) folds into the tr-type G domain. GTP is bound by residues 19–24 (DHGKST) and 135–138 (NKID).

The protein belongs to the TRAFAC class translation factor GTPase superfamily. Classic translation factor GTPase family. LepA subfamily.

It is found in the cell inner membrane. It catalyses the reaction GTP + H2O = GDP + phosphate + H(+). Functionally, required for accurate and efficient protein synthesis under certain stress conditions. May act as a fidelity factor of the translation reaction, by catalyzing a one-codon backward translocation of tRNAs on improperly translocated ribosomes. Back-translocation proceeds from a post-translocation (POST) complex to a pre-translocation (PRE) complex, thus giving elongation factor G a second chance to translocate the tRNAs correctly. Binds to ribosomes in a GTP-dependent manner. The chain is Elongation factor 4 from Chlamydia abortus (strain DSM 27085 / S26/3) (Chlamydophila abortus).